We begin with the raw amino-acid sequence, 436 residues long: Aminopeptidase C (436 aa).

Active-site residues include Cys-68, His-356, and Asn-378.

This sequence belongs to the peptidase C1 family. As to quaternary structure, homohexamer.

It carries out the reaction Inactivates bleomycin B2 (a cytotoxic glycometallopeptide) by hydrolysis of a carboxyamide bond of beta-aminoalanine, but also shows general aminopeptidase activity. The specificity varies somewhat with source, but amino acid arylamides of Met, Leu and Ala are preferred.. Functionally, hydrolyzes naphthylamide-substituted amino acids as well as di- and tripeptides in which the half-cystine residue is involved in a disulfide loop, notably in oxytocin and vasopressin. Also has a bleomycin hydrolase activity. In Lactococcus lactis subsp. cremoris (Streptococcus cremoris), this protein is Aminopeptidase C (pepC).